Here is a 142-residue protein sequence, read N- to C-terminus: Putative pterin-4-alpha-carbinolamine dehydratase (142 aa).

It belongs to the pterin-4-alpha-carbinolamine dehydratase family.

The enzyme catalyses (4aS,6R)-4a-hydroxy-L-erythro-5,6,7,8-tetrahydrobiopterin = (6R)-L-erythro-6,7-dihydrobiopterin + H2O. The protein is Putative pterin-4-alpha-carbinolamine dehydratase (pcbd-1) of Caenorhabditis elegans.